The sequence spans 217 residues: Imidazole glycerol phosphate synthase subunit HisH (217 aa).

The 212-residue stretch at 1–212 (MLAILDYKAG…YEYCRQSRQE (212 aa)) folds into the Glutamine amidotransferase type-1 domain. C79 functions as the Nucleophile in the catalytic mechanism. Active-site residues include H187 and E189.

As to quaternary structure, heterodimer of HisH and HisF.

The protein localises to the cytoplasm. It carries out the reaction 5-[(5-phospho-1-deoxy-D-ribulos-1-ylimino)methylamino]-1-(5-phospho-beta-D-ribosyl)imidazole-4-carboxamide + L-glutamine = D-erythro-1-(imidazol-4-yl)glycerol 3-phosphate + 5-amino-1-(5-phospho-beta-D-ribosyl)imidazole-4-carboxamide + L-glutamate + H(+). The catalysed reaction is L-glutamine + H2O = L-glutamate + NH4(+). The protein operates within amino-acid biosynthesis; L-histidine biosynthesis; L-histidine from 5-phospho-alpha-D-ribose 1-diphosphate: step 5/9. Functionally, IGPS catalyzes the conversion of PRFAR and glutamine to IGP, AICAR and glutamate. The HisH subunit catalyzes the hydrolysis of glutamine to glutamate and ammonia as part of the synthesis of IGP and AICAR. The resulting ammonia molecule is channeled to the active site of HisF. The protein is Imidazole glycerol phosphate synthase subunit HisH of Desulfovibrio desulfuricans (strain ATCC 27774 / DSM 6949 / MB).